The following is a 291-amino-acid chain: Small ribosomal subunit biogenesis GTPase RsgA (291 aa).

Positions 63–221 (KNELKRPPVS…IADTPGFSAL (159 aa)) constitute a CP-type G domain. GTP contacts are provided by residues 112–115 (TKKD) and 164–172 (GQSGVGKST). Zn(2+) contacts are provided by Cys-245, Cys-250, His-252, and Cys-258.

The protein belongs to the TRAFAC class YlqF/YawG GTPase family. RsgA subfamily. Monomer. Associates with 30S ribosomal subunit, binds 16S rRNA. The cofactor is Zn(2+).

Its subcellular location is the cytoplasm. In terms of biological role, one of several proteins that assist in the late maturation steps of the functional core of the 30S ribosomal subunit. Helps release RbfA from mature subunits. May play a role in the assembly of ribosomal proteins into the subunit. Circularly permuted GTPase that catalyzes slow GTP hydrolysis, GTPase activity is stimulated by the 30S ribosomal subunit. The polypeptide is Small ribosomal subunit biogenesis GTPase RsgA (Staphylococcus aureus (strain Mu50 / ATCC 700699)).